Here is a 230-residue protein sequence, read N- to C-terminus: Protein-L-isoaspartate O-methyltransferase (230 aa).

S68 is an active-site residue.

This sequence belongs to the methyltransferase superfamily. L-isoaspartyl/D-aspartyl protein methyltransferase family.

It is found in the cytoplasm. The catalysed reaction is [protein]-L-isoaspartate + S-adenosyl-L-methionine = [protein]-L-isoaspartate alpha-methyl ester + S-adenosyl-L-homocysteine. Functionally, catalyzes the methyl esterification of L-isoaspartyl residues in peptides and proteins that result from spontaneous decomposition of normal L-aspartyl and L-asparaginyl residues. It plays a role in the repair and/or degradation of damaged proteins. The sequence is that of Protein-L-isoaspartate O-methyltransferase from Salinibacter ruber (strain DSM 13855 / M31).